The chain runs to 1257 residues: Period circadian protein homolog 2 (1257 aa).

Positions 1 to 60 (MNGYVDFSPSPTSPTKEPGAPQPTQAVLQEDVDMSSGSSGNENCSTGRDSQGSDCDDNGK) are disordered. Polar residues predominate over residues 35 to 53 (SSGSSGNENCSTGRDSQGS). The Nuclear export signal 1 signature appears at 109–118 (LIRTLKELKV). The 68-residue stretch at 179–246 (ITSEYIVKNA…FHSYTTPYKL (68 aa)) folds into the PAS 1 domain. The short motif at 306–310 (LCCLL) is the LXXLL element. The PAS 2 domain maps to 319-385 (YEAPRIPPEK…MLAIHKKILQ (67 aa)). Residues 393–436 (YSPIRFRTRNGEYITLDTSWSSFINPWSRKISFIIGRHKVRVGP) form the PAC domain. The Nuclear export signal 2 motif lies at 460–469 (LTEQIHRLLM). 2 disordered regions span residues 471–565 (PVPH…GASL) and 617–638 (PSRK…PSKV). The tract at residues 478 to 482 (SGYGS) is important for protein stability. Residues 493-504 (MSQTSSSDSNGQ) are compositionally biased toward polar residues. The CSNK1E binding domain stretch occupies residues 510–709 (RRSGIFKTSG…GAAGGLSQEK (200 aa)). A phosphoserine mark is found at Ser525, Ser528, Ser531, Ser538, and Ser544. Residue Thr554 is modified to Phosphothreonine. Phosphoserine occurs at positions 659, 693, 697, 706, 758, and 763. The disordered stretch occupies residues 757-832 (RSRAQASDRG…SDTSQSSCPS (76 aa)). Residues 778–794 (KKTGKNRKLKSKRVKTR) carry the Nuclear localization signal motif. The segment covering 779 to 792 (KTGKNRKLKSKRVK) has biased composition (basic residues). Over residues 821–832 (SPSDTSQSSCPS) the composition is skewed to low complexity. Thr858 is modified (phosphothreonine). The tract at residues 882–1067 (EFAVQPLPFA…DLCSATGSAL (186 aa)) is interaction with PPARG. Position 939 is a phosphoserine (Ser939). Thr964 is modified (phosphothreonine). Position 971 is a phosphoserine (Ser971). The Nuclear export signal 3 signature appears at 983–990 (LQLNLLQL). Residues 994–1044 (PEGSTGAAGTLGTTGTAASGLDCTSGTSRDRQPKAPPTCNEPSDTQNSDAI) are disordered. Over residues 996-1014 (GSTGAAGTLGTTGTAASGL) the composition is skewed to low complexity. Residues 1033 to 1044 (NEPSDTQNSDAI) show a composition bias toward polar residues. An LXXLL motif is present at residues 1051 to 1055 (LNLLL). Residues 1070–1092 (SGASATSDSLGSSSLGFGTSQSG) are compositionally biased toward low complexity. Residues 1070-1115 (SGASATSDSLGSSSLGFGTSQSGAGSSDTSHTSKYFGSIDSSENNH) form a disordered region. A compositionally biased stretch (polar residues) spans 1093-1111 (AGSSDTSHTSKYFGSIDSS). At Ser1126 the chain carries Phosphoserine. Residues 1157-1257 (SRDLQAVLKE…LTGPRIEAQT (101 aa)) are CRY binding domain. The tract at residues 1224–1257 (PYEEDSPSPGLCDTSEAKEEEGEQLTGPRIEAQT) is disordered.

As to quaternary structure, homodimer. Component of the circadian core oscillator, which includes the CRY proteins, CLOCK or NPAS2, BMAL1 or BMAL2, CSNK1D and/or CSNK1E, TIMELESS, and the PER proteins. Interacts with CLOCK-BMAL1 (off DNA). Interacts with BMAL2. Interacts directly with PER1 and PER3, and through a C-terminal domain, with CRY1 and CRY2. Interacts (via PAS 2 domain) with TIMELESS. Interacts with NFIL3. Different large complexes have been identified with different repressive functions. The core of PER complexes is composed of at least PER1, PER2, PER3, CRY1, CRY2, CSNK1D and/or CSNK1E. The large PER complex involved in the repression of transcriptional termination is composed of at least PER2, CDK9, DDX5, DHX9, NCBP1 and POLR2A (active). The large PER complex involved in the histone deacetylation is composed of at least HDAC1, PER2, SFPQ and SIN3A. The large PER complex involved in the histone methylation is composed of at least PER2, CBX3, TRIM28, SUV39H1 and/or SUV39H2; CBX3 mediates the formation of the complex. Interacts with SETX; the interaction inhibits termination of circadian target genes. Interacts with the nuclear receptors HNF4A, NR1D1, NR4A2, RORA, PPARA, PPARG and THRA; the interaction with at least PPARG is ligand dependent. Interacts with PML. Interacts (phosphorylated) with BTRC and FBXW11; the interactions trigger proteasomal degradation. Interacts with NONO and SFPQ. Interacts with CAVIN3. Interacts with MAGEL2. Interacts with MAP1LC3B. Interacts with HNF4A. Post-translationally, acetylated. Deacetylated by SIRT1, resulting in decreased protein stability. Deacetylated by SIRT6, preventing its degradation by the proteasome, resulting in increased protein stability. In terms of processing, phosphorylated by CSNK1E and CSNK1D. Phosphorylation results in PER2 protein degradation. May be dephosphorylated by PP1. Ubiquitinated, leading to its proteasomal degradation. Ubiquitination may be inhibited by CRY1. In terms of tissue distribution, in the brain, high expression in SCN during the subjective day. Constitutive expression in the cornu ammonis and in the dentate gyrus of the hippocampus. Also expressed in the piriform cortex and the glomeruli of the olfactory bulb, and at a lower extent in the cerebral cortex. Not expressed in the pars tuberalis and the Purkinje neurons. Also expressed in adipose tissue (white and brown), heart, kidney, bladder, lumbar spinal cord, skeletal muscle, spleen, lung, pancreas and liver with highest levels in skeletal muscle and liver and lowest levels in spleen.

The protein localises to the nucleus. Its subcellular location is the cytoplasm. It localises to the perinuclear region. Its function is as follows. Transcriptional repressor which forms a core component of the circadian clock. The circadian clock, an internal time-keeping system, regulates various physiological processes through the generation of approximately 24 hour circadian rhythms in gene expression, which are translated into rhythms in metabolism and behavior. It is derived from the Latin roots 'circa' (about) and 'diem' (day) and acts as an important regulator of a wide array of physiological functions including metabolism, sleep, body temperature, blood pressure, endocrine, immune, cardiovascular, and renal function. Consists of two major components: the central clock, residing in the suprachiasmatic nucleus (SCN) of the brain, and the peripheral clocks that are present in nearly every tissue and organ system. Both the central and peripheral clocks can be reset by environmental cues, also known as Zeitgebers (German for 'timegivers'). The predominant Zeitgeber for the central clock is light, which is sensed by retina and signals directly to the SCN. The central clock entrains the peripheral clocks through neuronal and hormonal signals, body temperature and feeding-related cues, aligning all clocks with the external light/dark cycle. Circadian rhythms allow an organism to achieve temporal homeostasis with its environment at the molecular level by regulating gene expression to create a peak of protein expression once every 24 hours to control when a particular physiological process is most active with respect to the solar day. Transcription and translation of core clock components (CLOCK, NPAS2, BMAL1, BMAL2, PER1, PER2, PER3, CRY1 and CRY2) plays a critical role in rhythm generation, whereas delays imposed by post-translational modifications (PTMs) are important for determining the period (tau) of the rhythms (tau refers to the period of a rhythm and is the length, in time, of one complete cycle). A diurnal rhythm is synchronized with the day/night cycle, while the ultradian and infradian rhythms have a period shorter and longer than 24 hours, respectively. Disruptions in the circadian rhythms contribute to the pathology of cardiovascular diseases, cancer, metabolic syndrome and aging. A transcription/translation feedback loop (TTFL) forms the core of the molecular circadian clock mechanism. Transcription factors, CLOCK or NPAS2 and BMAL1 or BMAL2, form the positive limb of the feedback loop, act in the form of a heterodimer and activate the transcription of core clock genes and clock-controlled genes (involved in key metabolic processes), harboring E-box elements (5'-CACGTG-3') within their promoters. The core clock genes: PER1/2/3 and CRY1/2 which are transcriptional repressors form the negative limb of the feedback loop and interact with the CLOCK|NPAS2-BMAL1|BMAL2 heterodimer inhibiting its activity and thereby negatively regulating their own expression. This heterodimer also activates nuclear receptors NR1D1/2 and RORA/B/G, which form a second feedback loop and which activate and repress BMAL1 transcription, respectively. PER1 and PER2 proteins transport CRY1 and CRY2 into the nucleus with appropriate circadian timing, but also contribute directly to repression of clock-controlled target genes through interaction with several classes of RNA-binding proteins, helicases and others transcriptional repressors. PER appears to regulate circadian control of transcription by at least three different modes. First, interacts directly with the CLOCK-BMAL1 at the tail end of the nascent transcript peak to recruit complexes containing the SIN3-HDAC that remodel chromatin to repress transcription. Second, brings H3K9 methyltransferases such as SUV39H1 and SUV39H2 to the E-box elements of the circadian target genes, like PER2 itself or PER1. The recruitment of each repressive modifier to the DNA seems to be very precisely temporally orchestrated by the large PER complex, the deacetylases acting before than the methyltransferases. Additionally, large PER complexes are also recruited to the target genes 3' termination site through interactions with RNA-binding proteins and helicases that may play a role in transcription termination to regulate transcription independently of CLOCK-BMAL1 interactions. Recruitment of large PER complexes to the elongating polymerase at PER and CRY termination sites inhibited SETX action, impeding RNA polymerase II release and thereby repressing transcriptional reinitiation. May propagate clock information to metabolic pathways via the interaction with nuclear receptors. Coactivator of PPARA and corepressor of NR1D1, binds rhythmically at the promoter of nuclear receptors target genes like BMAL1 or G6PC1. Directly and specifically represses PPARG proadipogenic activity by blocking PPARG recruitment to target promoters and thereby transcriptional activation. Required for fatty acid and lipid metabolism, is involved as well in the regulation of circulating insulin levels. Plays an important role in the maintenance of cardiovascular functions through the regulation of NO and vasodilatatory prostaglandins production in aortas. Controls circadian glutamate uptake in synaptic vesicles through the regulation of VGLUT1 expression. May also be involved in the regulation of inflammatory processes. Represses the CLOCK-BMAL1 induced transcription of BHLHE40/DEC1 and ATF4. Negatively regulates the formation of the TIMELESS-CRY1 complex by competing with TIMELESS for binding to CRY1. The chain is Period circadian protein homolog 2 (Per2) from Mus musculus (Mouse).